A 552-amino-acid chain; its full sequence is uncharacterized protein (552 aa).

In terms of domain architecture, DhaL spans 8–200; sequence KLFAEMIIQG…LAIVYAGFLK (193 aa).

This is an uncharacterized protein from Staphylococcus saprophyticus subsp. saprophyticus (strain ATCC 15305 / DSM 20229 / NCIMB 8711 / NCTC 7292 / S-41).